A 282-amino-acid polypeptide reads, in one-letter code: Para-Rep C1 (282 aa).

One can recognise a CRESS-DNA virus Rep endonuclease domain in the interval 1–99 (MASKRWCFTL…ETLISEIGAP (99 aa)). An RCR-1 motif is present at residues 7-10 (CFTL). Residues Glu-38 and His-47 each contribute to the a divalent metal cation site. Positions 47–49 (HLQ) match the RCR-2 motif. A Nuclear localization signal motif is present at residues 56–77 (KMIRLGGLKKKFGYRAHWEIAK). Tyr-86 functions as the For DNA cleavage activity in the catalytic mechanism. An RCR-3 motif is present at residues 86 to 89 (YCTK). Position 94 (Ser-94) interacts with a divalent metal cation. 174 to 182 (GSDGGEGKS) serves as a coordination point for ATP.

It belongs to the nanoviridea/circoviridae replication-associated protein family. Homooligomer (Potential). Rep binds to repeated DNA motifs (iterons). Mg(2+) is required as a cofactor. The cofactor is Mn(2+).

Its subcellular location is the host nucleus. It catalyses the reaction ATP + H2O = ADP + phosphate + H(+). Functionally, initiates and terminates the replication only of its own subviral DNA molecule. The closed circular ssDNA genome is first converted to a superhelical dsDNA. Rep binds a specific hairpin at the genome origin of replication. Introduces an endonucleolytic nick within the intergenic region of the genome, thereby initiating the rolling circle replication (RCR). Following cleavage, binds covalently to the 5'-phosphate of DNA as a tyrosyl ester. The cleavage gives rise to a free 3'-OH that serves as a primer for the cellular DNA polymerase. The polymerase synthesizes the (+) strand DNA by rolling circle mechanism. After one round of replication, a Rep-catalyzed nucleotidyl transfer reaction releases a circular single-stranded virus genome, thereby terminating the replication. Displays origin-specific DNA cleavage, nucleotidyl transferase, ATPase and helicase activities. The chain is Para-Rep C1 (C1) from Faba bean necrotic yellows C11 alphasatellite (FBNYC11A).